The chain runs to 347 residues: GTPase Obg (347 aa).

An Obg domain is found at Met1 to Ile158. In terms of domain architecture, OBG-type G spans Ala159–Lys339. Residues Gly165–Ser172, Phe190–Thr194, Asp212–Gly215, Ser280–Asp283, and Ser320–Leu322 each bind GTP. 2 residues coordinate Mg(2+): Ser172 and Thr192.

It belongs to the TRAFAC class OBG-HflX-like GTPase superfamily. OBG GTPase family. As to quaternary structure, monomer. Requires Mg(2+) as cofactor.

It localises to the cytoplasm. In terms of biological role, an essential GTPase which binds GTP, GDP and possibly (p)ppGpp with moderate affinity, with high nucleotide exchange rates and a fairly low GTP hydrolysis rate. Plays a role in control of the cell cycle, stress response, ribosome biogenesis and in those bacteria that undergo differentiation, in morphogenesis control. In Campylobacter lari (strain RM2100 / D67 / ATCC BAA-1060), this protein is GTPase Obg.